We begin with the raw amino-acid sequence, 236 residues long: Phosphoglycolate phosphatase (236 aa).

The active-site Nucleophile is the Asp14. Asp14, Asp16, and Asp177 together coordinate Mg(2+).

It belongs to the HAD-like hydrolase superfamily. CbbY/CbbZ/Gph/YieH family. It depends on Mg(2+) as a cofactor.

The enzyme catalyses 2-phosphoglycolate + H2O = glycolate + phosphate. It participates in organic acid metabolism; glycolate biosynthesis; glycolate from 2-phosphoglycolate: step 1/1. Functionally, specifically catalyzes the dephosphorylation of 2-phosphoglycolate. Is involved in the dissimilation of the intracellular 2-phosphoglycolate formed during the DNA repair of 3'-phosphoglycolate ends, a major class of DNA lesions induced by oxidative stress. This chain is Phosphoglycolate phosphatase, found in Neisseria gonorrhoeae (strain ATCC 700825 / FA 1090).